The chain runs to 122 residues: MNKLNKQNIINHVNNLQLKKSVPNFQVGDTVSVSIKIADEKRTRIQKFDGLVLRRKGSGLSETFIVRKESSGVGVEKNFHVHNPNIEIELKRKGKVRRAYISYMRERSGKSARIKEKVVNTK.

Belongs to the bacterial ribosomal protein bL19 family.

This protein is located at the 30S-50S ribosomal subunit interface and may play a role in the structure and function of the aminoacyl-tRNA binding site. This chain is Large ribosomal subunit protein bL19, found in Mycoplasmoides gallisepticum (strain R(low / passage 15 / clone 2)) (Mycoplasma gallisepticum).